The primary structure comprises 96 residues: UPF0235 protein YggU (96 aa).

This sequence belongs to the UPF0235 family.

This is UPF0235 protein YggU from Escherichia coli O127:H6 (strain E2348/69 / EPEC).